The chain runs to 144 residues: Small ribosomal subunit protein bS6 (144 aa).

A disordered region spans residues 99–144 (KASPLAPCEEKGEEGKAEDAADELTTFGMADDDDLGDDDDTVEAGI). The span at 106 to 117 (CEEKGEEGKAED) shows a compositional bias: basic and acidic residues. Acidic residues predominate over residues 128-144 (ADDDDLGDDDDTVEAGI).

This sequence belongs to the bacterial ribosomal protein bS6 family.

Binds together with bS18 to 16S ribosomal RNA. This is Small ribosomal subunit protein bS6 from Magnetococcus marinus (strain ATCC BAA-1437 / JCM 17883 / MC-1).